The chain runs to 343 residues: Probable long-chain-alcohol O-fatty-acyltransferase 2 (343 aa).

8 helical membrane passes run 7–27, 36–56, 58–78, 117–137, 148–168, 235–255, 260–280, and 292–312; these read NLIKVWISALISISYCYYISS, LLSLLPIFIIFLLLPLFFSSV, FCVISGFFFTWLANFKLFLFA, PMSKWVLAFKLLIFSFLLHVY, FAFLALFTIHVYLEAELILVF, GMLATFIVSGLMHELIYFYVI, TWEVTCFFLLHGVVTCLEIAM, and AVSGLAITVFLLVTAGWLFYP.

This sequence belongs to the wax synthase family.

The protein localises to the membrane. The enzyme catalyses a long chain fatty alcohol + a fatty acyl-CoA = a wax ester + CoA. Its function is as follows. Catalyzes the final step in the synthesis of long-chain linear esters (waxes). The protein is Probable long-chain-alcohol O-fatty-acyltransferase 2 (AT2) of Arabidopsis thaliana (Mouse-ear cress).